The following is a 1018-amino-acid chain: Importin-9 (1018 aa).

In terms of domain architecture, Importin N-terminal spans 35–114 (TEKRIKQLEY…RNILPNGLYD (80 aa)). The segment at 921-950 (GKSDEPLTDSEEDGDDEDAPGNPDKPRYIS) is disordered. The span at 926 to 939 (PLTDSEEDGDDEDA) shows a compositional bias: acidic residues.

Belongs to the importin beta family.

It is found in the cytoplasm. The protein resides in the nucleus. In terms of biological role, nuclear transport receptor that mediates nuclear import of proteins. Serves as receptor for nuclear localization signals (NLS) in cargo substrates. Is thought to mediate docking of the importin/substrate complex to the nuclear pore complex (NPC) through binding to nucleoporin and the complex is subsequently translocated through the pore by an energy requiring, Ran-dependent mechanism. Mediates the import of pre-assembled proteasomes into the nucleus during the late stages of sperm development. The chain is Importin-9 from Drosophila melanogaster (Fruit fly).